The chain runs to 566 residues: uncharacterized protein (566 aa).

This is an uncharacterized protein from Escherichia coli (strain K12).